The following is a 183-amino-acid chain: Hypoxanthine/guanine phosphoribosyltransferase (183 aa).

This sequence belongs to the purine/pyrimidine phosphoribosyltransferase family. Archaeal HPRT subfamily. In terms of assembly, homodimer.

It localises to the cytoplasm. The enzyme catalyses IMP + diphosphate = hypoxanthine + 5-phospho-alpha-D-ribose 1-diphosphate. The catalysed reaction is GMP + diphosphate = guanine + 5-phospho-alpha-D-ribose 1-diphosphate. It participates in purine metabolism; IMP biosynthesis via salvage pathway; IMP from hypoxanthine: step 1/1. Its function is as follows. Catalyzes a salvage reaction resulting in the formation of IMP that is energically less costly than de novo synthesis. This is Hypoxanthine/guanine phosphoribosyltransferase from Methanothermococcus okinawensis (strain DSM 14208 / JCM 11175 / IH1).